The chain runs to 370 residues: 3-isopropylmalate dehydrogenase (370 aa).

Residue 77-90 coordinates NAD(+); the sequence is GPKWDGVPYEHRPE. Arg-97, Arg-107, Arg-135, and Asp-226 together coordinate substrate. Positions 226, 250, and 254 each coordinate Mg(2+). An NAD(+)-binding site is contributed by 290 to 302; that stretch reads GSAPDIAGKSIAN.

Belongs to the isocitrate and isopropylmalate dehydrogenases family. LeuB type 1 subfamily. In terms of assembly, homodimer. Requires Mg(2+) as cofactor. Mn(2+) serves as cofactor.

It is found in the cytoplasm. It carries out the reaction (2R,3S)-3-isopropylmalate + NAD(+) = 4-methyl-2-oxopentanoate + CO2 + NADH. It functions in the pathway amino-acid biosynthesis; L-leucine biosynthesis; L-leucine from 3-methyl-2-oxobutanoate: step 3/4. Functionally, catalyzes the oxidation of 3-carboxy-2-hydroxy-4-methylpentanoate (3-isopropylmalate) to 3-carboxy-4-methyl-2-oxopentanoate. The product decarboxylates to 4-methyl-2 oxopentanoate. The polypeptide is 3-isopropylmalate dehydrogenase (leuB) (Agrobacterium fabrum (strain C58 / ATCC 33970) (Agrobacterium tumefaciens (strain C58))).